Here is a 152-residue protein sequence, read N- to C-terminus: Prostaglandin E synthase (152 aa).

Over 1–12 (MPAHSLVMSSPA) the chain is Lumenal. The chain crosses the membrane as a helical span at residues 13–41 (LPAFLLCSTLLVIKMYVVAIITGQVRLRK). R38 contributes to the glutathione binding site. The Cytoplasmic portion of the chain corresponds to 42-60 (KAFANPEDALRHGGPQYCR). The helical transmembrane segment at 61–90 (SDPDVERCLRAHRNDMETIYPFLFLGFVYS) threads the bilayer. Residue 73-77 (RNDME) participates in glutathione binding. The Lumenal portion of the chain corresponds to 91–95 (FLGPN). The helical transmembrane segment at 96–119 (PFVAWMHFLVFLVGRVAHTVAYLG) threads the bilayer. Glutathione-binding residues include H113 and Y117. At 120–123 (KLRA) the chain is on the cytoplasmic side. Residues 124 to 152 (PIRSVTYTLAQLPCASMALQILWEAARHL) form a helical membrane-spanning segment. A glutathione-binding site is contributed by 126–130 (RSVTY).

This sequence belongs to the MAPEG family. In terms of assembly, homotrimer. It depends on glutathione as a cofactor.

The protein localises to the membrane. Its subcellular location is the cytoplasm. It localises to the perinuclear region. The catalysed reaction is prostaglandin H2 = prostaglandin E2. The enzyme catalyses 2-glyceryl-prostaglandin H2 = 2-glyceryl-prostaglandin E2. It catalyses the reaction prostaglandin G2 = (15S)-15-hydroperoxy-prostaglandin E2. It carries out the reaction 1-chloro-2,4-dinitrobenzene + glutathione = 2,4-dinitrophenyl-S-glutathione + chloride + H(+). The catalysed reaction is (5S)-hydroperoxy-(6E,8Z,11Z,14Z)-eicosatetraenoate + 2 glutathione = (5S)-hydroxy-(6E,8Z,11Z,14Z)-eicosatetraenoate + glutathione disulfide + H2O. It participates in lipid metabolism; prostaglandin biosynthesis. With respect to regulation, induced by interleukin IL1B. Functionally, terminal enzyme of the cyclooxygenase (COX)-2-mediated prostaglandin E2 (PGE2) biosynthetic pathway. Catalyzes the glutathione-dependent oxidoreduction of prostaglandin endoperoxide H2 (PGH2) to prostaglandin E2 (PGE2) in response to inflammatory stimuli. Plays a key role in inflammation response, fever and pain. Also catalyzes the oxidoreduction of endocannabinoids into prostaglandin glycerol esters and PGG2 into 15-hydroperoxy-PGE2. In addition, displays low glutathione transferase and glutathione-dependent peroxidase activities, toward 1-chloro-2,4-dinitrobenzene and 5-hydroperoxyicosatetraenoic acid (5-HPETE), respectively. The protein is Prostaglandin E synthase (PTGES) of Homo sapiens (Human).